Here is a 349-residue protein sequence, read N- to C-terminus: tRNA pseudouridine synthase D (349 aa).

Phenylalanine 27 serves as a coordination point for substrate. Aspartate 80 serves as the catalytic Nucleophile. Position 129 (asparagine 129) interacts with substrate. The TRUD domain occupies 155 to 303 (GVPNYFGAQR…VEAARRAMLL (149 aa)). Phenylalanine 329 is a substrate binding site.

It belongs to the pseudouridine synthase TruD family.

The catalysed reaction is uridine(13) in tRNA = pseudouridine(13) in tRNA. Its function is as follows. Responsible for synthesis of pseudouridine from uracil-13 in transfer RNAs. The sequence is that of tRNA pseudouridine synthase D from Shigella boydii serotype 4 (strain Sb227).